We begin with the raw amino-acid sequence, 553 residues long: Efflux pump mlcE (553 aa).

Residues M1–S19 are compositionally biased toward basic and acidic residues. Positions M1–S29 are disordered. N-linked (GlcNAc...) asparagine glycosylation occurs at N21. Helical transmembrane passes span L41–V61, V77–G96, L101–L121, A136–A156, V164–G184, C196–I216, L245–G265, S273–W293, L319–F339, V352–I372, G376–V396, A440–F460, and T516–W536. N-linked (GlcNAc...) asparagine glycosylation occurs at N543.

Belongs to the major facilitator superfamily. TCR/Tet family.

It localises to the membrane. Functionally, efflux pump; part of the gene cluster that mediates the biosynthesis of compactin, also known as mevastatin or ML-236B, and which acts as a potent competitive inhibitor of HMG-CoA reductase. This chain is Efflux pump mlcE, found in Penicillium citrinum.